The following is a 458-amino-acid chain: tRNA modification GTPase MnmE (458 aa).

(6S)-5-formyl-5,6,7,8-tetrahydrofolate contacts are provided by Arg22, Glu85, and Arg124. The TrmE-type G domain occupies 220-379; it reads GIKTVIVGRP…LEEHISELVF (160 aa). Asn230 provides a ligand contact to K(+). GTP is bound by residues 230–235, 249–255, and 274–277; these read NVGKSS, TEIPGTT, and DTAG. Residue Ser234 participates in Mg(2+) binding. 3 residues coordinate K(+): Thr249, Ile251, and Thr254. Thr255 provides a ligand contact to Mg(2+). Lys458 is a (6S)-5-formyl-5,6,7,8-tetrahydrofolate binding site.

It belongs to the TRAFAC class TrmE-Era-EngA-EngB-Septin-like GTPase superfamily. TrmE GTPase family. In terms of assembly, homodimer. Heterotetramer of two MnmE and two MnmG subunits. The cofactor is K(+).

It localises to the cytoplasm. Its function is as follows. Exhibits a very high intrinsic GTPase hydrolysis rate. Involved in the addition of a carboxymethylaminomethyl (cmnm) group at the wobble position (U34) of certain tRNAs, forming tRNA-cmnm(5)s(2)U34. The polypeptide is tRNA modification GTPase MnmE (Natranaerobius thermophilus (strain ATCC BAA-1301 / DSM 18059 / JW/NM-WN-LF)).